Here is a 367-residue protein sequence, read N- to C-terminus: Anhydro-N-acetylmuramic acid kinase (367 aa).

Position 11-18 (11-18 (GTSLDGVD)) interacts with ATP.

It belongs to the anhydro-N-acetylmuramic acid kinase family.

It catalyses the reaction 1,6-anhydro-N-acetyl-beta-muramate + ATP + H2O = N-acetyl-D-muramate 6-phosphate + ADP + H(+). It functions in the pathway amino-sugar metabolism; 1,6-anhydro-N-acetylmuramate degradation. Its pathway is cell wall biogenesis; peptidoglycan recycling. Catalyzes the specific phosphorylation of 1,6-anhydro-N-acetylmuramic acid (anhMurNAc) with the simultaneous cleavage of the 1,6-anhydro ring, generating MurNAc-6-P. Is required for the utilization of anhMurNAc either imported from the medium or derived from its own cell wall murein, and thus plays a role in cell wall recycling. This Chromobacterium violaceum (strain ATCC 12472 / DSM 30191 / JCM 1249 / CCUG 213 / NBRC 12614 / NCIMB 9131 / NCTC 9757 / MK) protein is Anhydro-N-acetylmuramic acid kinase.